The sequence spans 394 residues: MATAQLQRTPMSALVFPNKISTEHQSLVLVKRLLAVSVSCITYLRGIFPECAYGTRYLDDLCVKILREDKNCPGSTQLVKWMLGCYDALQKKYLRMVVLAVYTNPEDPQTISECYQFKFKYTNNGPLMDFISKNQSNESSMSSTDTKKASILLIRKIYILMQNLGPLPNDVCLTMKLFYYDEVTPPDYQPPGFKDGDCEGVIFEGEPMYLNVGEVSTPFHIFKVKVTTERERMENIDSTILSPKQIKTPFQKILRDKDVEDEQEHYTSDDLDMETKMEEQEKNPASSELGEPSLVCEEDEIMRSKESPDLSISHSQVEQLVNKTSELDMSESKTRSGKVFQNKMANGNQPVKSSKENRKRSQHESGRRVLHHFDSSSQESVPKRRKFSEPKEHI.

One can recognise an HORMA domain in the interval 24 to 226 (HQSLVLVKRL…TPFHIFKVKV (203 aa)). The disordered stretch occupies residues 252 to 394 (KILRDKDVED…RKFSEPKEHI (143 aa)). Residues 253-282 (ILRDKDVEDEQEHYTSDDLDMETKMEEQEK) show a composition bias toward basic and acidic residues. 2 stretches are compositionally biased toward polar residues: residues 310 to 324 (LSISHSQVEQLVNKT) and 343 to 352 (KMANGNQPVK). Basic and acidic residues predominate over residues 362–374 (QHESGRRVLHHFD). Residue Ser376 is modified to Phosphoserine. The Nuclear localization signal motif lies at 383–386 (KRRK).

As to quaternary structure, interacts with HORMAD2. Interacts with IHO1. Post-translationally, phosphorylated at Ser-377 in a SPO11-dependent manner.

It localises to the nucleus. It is found in the chromosome. Functionally, plays a key role in meiotic progression. Regulates 3 different functions during meiosis: ensures that sufficient numbers of processed DNA double-strand breaks (DSBs) are available for successful homology search by increasing the steady-state numbers of single-stranded DSB ends. Promotes synaptonemal-complex formation independently of its role in homology search. Plays a key role in the male mid-pachytene checkpoint and the female meiotic prophase checkpoint: required for efficient build-up of ATR activity on unsynapsed chromosome regions, a process believed to form the basis of meiotic silencing of unsynapsed chromatin (MSUC) and meiotic prophase quality control in both sexes. This Macaca fascicularis (Crab-eating macaque) protein is HORMA domain-containing protein 1 (HORMAD1).